Consider the following 437-residue polypeptide: MKVYIETMGCAMNSRDSEHLLSELSKLDYKETSDPKAADLILINTCSVREKPERKLFSEIGQFAKIKKPNAKIGVCGCTASHMGADILKKAPSVSFVLGARNVSKISQVIHKEKAVEVAIDYDESAYAFEFFEKKAQIRSLLNISIGCDKKCAYCIVPHTRGKEISIPMDLILKEAEKLASNGTKELMLLGQNVNNYGARFSSEHAKVDFSDLLDKLSEIQGIERIRFTSPHPLHMNDAFLERFAKNPKVCKSIHMPLQSGSSTVLKMMRRGYSKEWFLNRVEKLKALVPEVGISTDIIVGFPNESDKDFEDTMEVLEKVRFDTLYSFIYSPRPFTEAGAWKERVPLEVSSSRLERLQNRHKEILEEKAKLEVGKTHVVLVENRREIDNQIVGFEGRSDTGKFIEVACKEKRNPGELVRVEIVSHSKGRLIATAKGD.

An MTTase N-terminal domain is found at 1–115 (MKVYIETMGC…ISQVIHKEKA (115 aa)). [4Fe-4S] cluster contacts are provided by Cys-10, Cys-46, Cys-78, Cys-148, Cys-152, and Cys-155. In terms of domain architecture, Radical SAM core spans 134-367 (KKAQIRSLLN…QNRHKEILEE (234 aa)). The TRAM domain maps to 370–436 (KLEVGKTHVV…KGRLIATAKG (67 aa)).

This sequence belongs to the methylthiotransferase family. MiaB subfamily. In terms of assembly, monomer. The cofactor is [4Fe-4S] cluster.

Its subcellular location is the cytoplasm. It carries out the reaction N(6)-dimethylallyladenosine(37) in tRNA + (sulfur carrier)-SH + AH2 + 2 S-adenosyl-L-methionine = 2-methylsulfanyl-N(6)-dimethylallyladenosine(37) in tRNA + (sulfur carrier)-H + 5'-deoxyadenosine + L-methionine + A + S-adenosyl-L-homocysteine + 2 H(+). Its function is as follows. Catalyzes the methylthiolation of N6-(dimethylallyl)adenosine (i(6)A), leading to the formation of 2-methylthio-N6-(dimethylallyl)adenosine (ms(2)i(6)A) at position 37 in tRNAs that read codons beginning with uridine. The chain is tRNA-2-methylthio-N(6)-dimethylallyladenosine synthase from Helicobacter pylori (strain Shi470).